Reading from the N-terminus, the 610-residue chain is UvrABC system protein C (610 aa).

The GIY-YIG domain maps to 13–91 (HLPGVYRMYD…IKENQPKYNV (79 aa)). In terms of domain architecture, UVR spans 201-236 (GQVIEHLVQKMENAAQELDFEAAARFRDQIQSVRAV).

Belongs to the UvrC family. Interacts with UvrB in an incision complex.

Its subcellular location is the cytoplasm. In terms of biological role, the UvrABC repair system catalyzes the recognition and processing of DNA lesions. UvrC both incises the 5' and 3' sides of the lesion. The N-terminal half is responsible for the 3' incision and the C-terminal half is responsible for the 5' incision. In Actinobacillus pleuropneumoniae serotype 3 (strain JL03), this protein is UvrABC system protein C.